The sequence spans 591 residues: MADADKSEAAAGDDGSQQQPAEPRRDTHPGEPEKPPRSSANGVKMENDESVKEEKSDLKEKSTGNKKANRFHPYSKDKNSGTGEKKGPNRNRVFISNIPYDMKWQAIKDLMREKVGEVTYVELFKDAEGKSRGCGVVEFKDEEFVKKALETMNKYDLSGRPLNIKEDPDGENARRALQRTGTSFQGSHASDVGSGLVNLPPSILNNPNIPPEVISNLQAGRLGSTIFVANLDFKVGWKKLKEVFSIAGTVKRADIKEDKDGKSRGMGTVTFEQAIEAVQAISMFNGQFLFDRPMHVKMDDKSVPHEDYRSHDSKTSQLPRGLGGIGMGLGPGGQPISASQLNITGVMGNLGPSGMGMDGPGFGGVNRIGGGVGFGGLEAMNSMAGFGGVGRMGELYRGAMTSSMERDFGRGDIGLSRGFGDSFGRLGSAMIGGFAGRIGASNMGPVGTGISGSMSGMSTVTGGMGMGLDRMSSSFDRMGPGIGAILERSIDVDRGFLSGPMGSGMRDRLGSKGNQIFVRNLPFDLTWQKLKEKFSQCGHVMFAEIKMENGKSKGCGTVRFESAESAEKACRIMNGIKISGREIDVRLDRNA.

The disordered stretch occupies residues 1–92; it reads MADADKSEAA…GEKKGPNRNR (92 aa). A compositionally biased stretch (basic and acidic residues) spans 22–36; sequence EPRRDTHPGEPEKPP. Residue Lys44 forms a Glycyl lysine isopeptide (Lys-Gly) (interchain with G-Cter in SUMO2) linkage. Basic and acidic residues-rich tracts occupy residues 45 to 63 and 74 to 87; these read MENDESVKEEKSDLKEKST and YSKDKNSGTGEKKG. 2 consecutive RRM domains span residues 91–169 and 224–301; these read NRVF…EDPD and STIF…MDDK. 2 positions are modified to omega-N-methylarginine: Arg397 and Arg417. The residue at position 422 (Ser422) is a Phosphoserine. One can recognise an RRM 3 domain in the interval 514–590; that stretch reads NQIFVRNLPF…REIDVRLDRN (77 aa).

As to quaternary structure, monomer. As to expression, highly expressed in the brain.

It localises to the nucleus. Functionally, transcriptional repressor of the myelin basic protein gene (MBP). Binds to the proximal MB1 element 5'-TTGTCC-3' of the MBP promoter. Its binding to MB1 and function are inhibited by PURA. This is Myelin expression factor 2 (Myef2) from Mus musculus (Mouse).